A 275-amino-acid chain; its full sequence is Formamidopyrimidine-DNA glycosylase (275 aa).

Proline 2 acts as the Schiff-base intermediate with DNA in catalysis. Glutamate 3 functions as the Proton donor in the catalytic mechanism. Residue lysine 58 is the Proton donor; for beta-elimination activity of the active site. DNA contacts are provided by histidine 93, arginine 111, and arginine 156. The FPG-type zinc-finger motif lies at 241–275 (FVYDRAGEPCRVCGTPIRQIVQGQRSTYFCPTCQR). The active-site Proton donor; for delta-elimination activity is arginine 265.

It belongs to the FPG family. As to quaternary structure, monomer. It depends on Zn(2+) as a cofactor.

It catalyses the reaction Hydrolysis of DNA containing ring-opened 7-methylguanine residues, releasing 2,6-diamino-4-hydroxy-5-(N-methyl)formamidopyrimidine.. It carries out the reaction 2'-deoxyribonucleotide-(2'-deoxyribose 5'-phosphate)-2'-deoxyribonucleotide-DNA = a 3'-end 2'-deoxyribonucleotide-(2,3-dehydro-2,3-deoxyribose 5'-phosphate)-DNA + a 5'-end 5'-phospho-2'-deoxyribonucleoside-DNA + H(+). Its function is as follows. Involved in base excision repair of DNA damaged by oxidation or by mutagenic agents. Acts as a DNA glycosylase that recognizes and removes damaged bases. Has a preference for oxidized purines, such as 7,8-dihydro-8-oxoguanine (8-oxoG). Has AP (apurinic/apyrimidinic) lyase activity and introduces nicks in the DNA strand. Cleaves the DNA backbone by beta-delta elimination to generate a single-strand break at the site of the removed base with both 3'- and 5'-phosphates. In Burkholderia multivorans (strain ATCC 17616 / 249), this protein is Formamidopyrimidine-DNA glycosylase.